The chain runs to 462 residues: MNKQLTNNGFRLTQRGLQIGKYMYRTYQNVKRIQKGGPDSFKAAEDFVKDTSEIGVIAVKMSQFLSARSDIVDERTLKVIERLQSEVPPEKESPPDFTFYEWYKEPIASASIATVYKGKRKTDNSDVILKRVRPEVKQRIMEDLPLFIIVLDIAKFFGVPGAENMLEIVRECQPVLLGELNLKLEAKAMSLFKKKFASIPWLTIPTVYEAGETYMISEYVPSKKITAAYPNEMLARRLFELYIYMTIDIGLVHADPHAGNIGIKKDGTFVLYDFGAIIDVRDAKQYIAKCLKSVVIGDTDGVVRSLEDMGVIKSGGSVARLKKAIPKIKKIMESEDFNVELSKLPEFTSNENRIFELTTRYIYLIRSLTIVEGIISYHDRDFSLTKYIKKYNDIIDDIVEVPAIDIVKEIAGDFLTTPASLKNMNDLVFSMKDEISTEIADAKKIARYGFAMFLLIEIIKML.

This sequence belongs to the protein kinase superfamily. ADCK protein kinase family.

In Chlorella (PBCV-1), this protein is Putative ABC transporter A445L.